Consider the following 375-residue polypeptide: Transaldolase (375 aa).

Residue Lys-145 is the Schiff-base intermediate with substrate of the active site.

The protein belongs to the transaldolase family. Type 2 subfamily.

It is found in the cytoplasm. The enzyme catalyses D-sedoheptulose 7-phosphate + D-glyceraldehyde 3-phosphate = D-erythrose 4-phosphate + beta-D-fructose 6-phosphate. Its pathway is carbohydrate degradation; pentose phosphate pathway; D-glyceraldehyde 3-phosphate and beta-D-fructose 6-phosphate from D-ribose 5-phosphate and D-xylulose 5-phosphate (non-oxidative stage): step 2/3. In terms of biological role, transaldolase is important for the balance of metabolites in the pentose-phosphate pathway. The protein is Transaldolase of Mycobacterium leprae (strain Br4923).